Reading from the N-terminus, the 189-residue chain is Chitin synthase 2 (189 aa).

This sequence belongs to the chitin synthase family. Class II subfamily.

The protein resides in the cell membrane. It carries out the reaction [(1-&gt;4)-N-acetyl-beta-D-glucosaminyl](n) + UDP-N-acetyl-alpha-D-glucosamine = [(1-&gt;4)-N-acetyl-beta-D-glucosaminyl](n+1) + UDP + H(+). Its function is as follows. Polymerizes chitin, a structural polymer of the cell wall and septum, by transferring the sugar moiety of UDP-GlcNAc to the non-reducing end of the growing chitin polymer. The protein is Chitin synthase 2 (CHS2) of Exophiala exophialae (Black yeast-like fungus).